Reading from the N-terminus, the 365-residue chain is Putative tRNA 2'-phosphotransferase (365 aa).

Disordered stretches follow at residues 1–35 (MYKN…IRPR) and 231–254 (LLDA…PESI). The span at 17-27 (SGTPATKSSSK) shows a compositional bias: low complexity.

The protein belongs to the KptA/TPT1 family.

It carries out the reaction 2'-phospho-[ligated tRNA] + NAD(+) = mature tRNA + ADP-alpha-D-ribose 1'',2''-cyclic phosphate + nicotinamide. Functionally, catalyzes the last step of tRNA splicing, the transfer of the splice junction 2'-phosphate from ligated tRNA to NAD to produce ADP-ribose 1''-2'' cyclic phosphate. The sequence is that of Putative tRNA 2'-phosphotransferase from Schizosaccharomyces pombe (strain 972 / ATCC 24843) (Fission yeast).